The following is a 214-amino-acid chain: dITP/XTP pyrophosphatase (214 aa).

13–18 (SHNKGK) is a binding site for substrate. Glu-45 and Asp-74 together coordinate Mg(2+). Asp-74 functions as the Proton acceptor in the catalytic mechanism. Residues Ser-75, 163–166 (FGYD), Lys-186, and 199–200 (HR) each bind substrate.

The protein belongs to the HAM1 NTPase family. As to quaternary structure, homodimer. The cofactor is Mg(2+).

The enzyme catalyses XTP + H2O = XMP + diphosphate + H(+). The catalysed reaction is dITP + H2O = dIMP + diphosphate + H(+). It catalyses the reaction ITP + H2O = IMP + diphosphate + H(+). Functionally, pyrophosphatase that catalyzes the hydrolysis of nucleoside triphosphates to their monophosphate derivatives, with a high preference for the non-canonical purine nucleotides XTP (xanthosine triphosphate), dITP (deoxyinosine triphosphate) and ITP. Seems to function as a house-cleaning enzyme that removes non-canonical purine nucleotides from the nucleotide pool, thus preventing their incorporation into DNA/RNA and avoiding chromosomal lesions. The sequence is that of dITP/XTP pyrophosphatase from Agrobacterium fabrum (strain C58 / ATCC 33970) (Agrobacterium tumefaciens (strain C58)).